Here is a 571-residue protein sequence, read N- to C-terminus: Septation ring formation regulator EzrA (571 aa).

At 1 to 3 the chain is on the extracellular side; that stretch reads MYY. The chain crosses the membrane as a helical span at residues 4-22; the sequence is MLIGFIIVVIAVIGAGYIL. The Cytoplasmic portion of the chain corresponds to 23–571; that stretch reads KRKHYQRINE…ESKVSVDDIE (549 aa). Coiled-coil stretches lie at residues 248–298, 326–374, 400–437, and 478–529; these read LAQM…DTLE, DALA…ASGE, KFAEELRSLRKDELEARDDAERMRRAIITLDRKMERER, and RIAE…ENHF.

This sequence belongs to the EzrA family.

Its subcellular location is the cell membrane. Its function is as follows. Negative regulator of FtsZ ring formation; modulates the frequency and position of FtsZ ring formation. Inhibits FtsZ ring formation at polar sites. Interacts either with FtsZ or with one of its binding partners to promote depolymerization. This is Septation ring formation regulator EzrA from Listeria monocytogenes serotype 4b (strain CLIP80459).